The chain runs to 1117 residues: PR domain zinc finger protein 10 (1117 aa).

Residues 97-142 (QQTPLGGLEAKEEEDEDEDEDTEEDEEEDGEDADLDDWEPDPPRPF) are disordered. Acidic residues predominate over residues 107–136 (KEEEDEDEDEDTEEDEEEDGEDADLDDWEP). The 119-residue stretch at 182 to 300 (LPLVLYIDRF…PKQELKVWYA (119 aa)) folds into the SET domain. The tract at residues 201–305 (IPKRTQLGPV…KVWYAASYAE (105 aa)) is N-terminal PR domain; essential for transcriptional activator activity. Residues 329–351 (WPCYECNRRFISSEQLQQHLNSH) form a C2H2-type 1 zinc finger. A Glycyl lysine isopeptide (Lys-Gly) (interchain with G-Cter in SUMO2) cross-link involves residue Lys-354. Residues 361-381 (TRGRGRGRGKRRFGPGRRPGR) show a composition bias toward basic residues. The disordered stretch occupies residues 361–386 (TRGRGRGRGKRRFGPGRRPGRPPKFI). Residue Ser-398 is modified to Phosphoserine. The residue at position 402 (Thr-402) is a Phosphothreonine. A disordered region spans residues 440–474 (QETQSSLEHEPETHTLHLQPQHEESVVPTQSTLTA). The span at 446 to 464 (LEHEPETHTLHLQPQHEES) shows a compositional bias: basic and acidic residues. 9 consecutive C2H2-type zinc fingers follow at residues 500–522 (FKCL…LRFH), 530–552 (LTCD…MKLH), 558–580 (YSCI…VAIH), 586–609 (FTCP…RSFH), 614–636 (YQCT…MLRH), 642–665 (FLCS…QRMH), 697–720 (FKCR…SKRH), 742–765 (YFCQ…LKNH), and 804–827 (VCCP…RKKH). The segment at 871–1097 (QAMTELSQTL…QTTSQQQTTQ (227 aa)) is C-terminal glutamine-rich region; essential for transcriptional activator activity. Disordered regions lie at residues 919–943 (VAPA…DPQP), 958–1001 (GQPL…SSVQ), and 1066–1094 (QTSA…SQQQ). Residues 924–934 (SPHQSQQSTVD) show a composition bias toward polar residues.

It belongs to the class V-like SAM-binding methyltransferase superfamily.

The protein localises to the nucleus. Its function is as follows. Transcriptional activator, essential for early embryonic development and survival of embryonic stem cells (ESCs). Supports cell growth and survival during early development by transcriptionally activating the expression of the translation initiation factor EIF3B, to sustain global translation. Activates the transcription of FLNC. The polypeptide is PR domain zinc finger protein 10 (PRDM10) (Pongo abelii (Sumatran orangutan)).